The following is a 229-amino-acid chain: PKHD-type hydroxylase BBta_3541 (229 aa).

The 103-residue stretch at 78-180 folds into the Fe2OG dioxygenase domain; that stretch reads QIFPPLFNRY…RVASFFWMQS (103 aa). Residues His98, Asp100, and His161 each coordinate Fe cation. Residue Arg171 participates in 2-oxoglutarate binding.

Fe(2+) is required as a cofactor. L-ascorbate serves as cofactor.

The protein is PKHD-type hydroxylase BBta_3541 of Bradyrhizobium sp. (strain BTAi1 / ATCC BAA-1182).